We begin with the raw amino-acid sequence, 129 residues long: Phosphoribosyl-AMP cyclohydrolase (129 aa).

Asp-76 contributes to the Mg(2+) binding site. Cys-77 provides a ligand contact to Zn(2+). The Mg(2+) site is built by Asp-78 and Asp-80. The Zn(2+) site is built by Cys-97 and Cys-104.

The protein belongs to the PRA-CH family. Homodimer. Mg(2+) serves as cofactor. The cofactor is Zn(2+).

It is found in the cytoplasm. The enzyme catalyses 1-(5-phospho-beta-D-ribosyl)-5'-AMP + H2O = 1-(5-phospho-beta-D-ribosyl)-5-[(5-phospho-beta-D-ribosylamino)methylideneamino]imidazole-4-carboxamide. The protein operates within amino-acid biosynthesis; L-histidine biosynthesis; L-histidine from 5-phospho-alpha-D-ribose 1-diphosphate: step 3/9. In terms of biological role, catalyzes the hydrolysis of the adenine ring of phosphoribosyl-AMP. The polypeptide is Phosphoribosyl-AMP cyclohydrolase (Albidiferax ferrireducens (strain ATCC BAA-621 / DSM 15236 / T118) (Rhodoferax ferrireducens)).